Reading from the N-terminus, the 552-residue chain is Polypeptide N-acetylgalactosaminyltransferase 14 (552 aa).

Over 1 to 6 the chain is Cytoplasmic; it reads MRRLTR. The helical; Signal-anchor for type II membrane protein transmembrane segment at 7–26 threads the bilayer; the sequence is RLVLPVFGVLWITVLLFFWV. Topologically, residues 27-552 are lumenal; sequence TKRKLEVPTG…MSQHWDMVSS (526 aa). 5 disulfides stabilise this stretch: Cys101–Cys328, Cys319–Cys397, Cys430–Cys449, Cys476–Cys493, and Cys517–Cys538. The interval 110 to 215 is catalytic subdomain A; that stretch reads LPPTSIIITF…RDWLQPLLHR (106 aa). Substrate-binding residues include Asp151 and Arg176. Mn(2+) is bound at residue Asp199. Residue Ser200 participates in substrate binding. His201 provides a ligand contact to Mn(2+). The segment at 274 to 336 is catalytic subdomain B; it reads PIRTPIIAGG…PCSRVGHVFR (63 aa). Trp305 contacts substrate. His333 is a Mn(2+) binding site. The substrate site is built by Arg336, His339, and Tyr341. The Ricin B-type lectin domain occupies 415 to 550; it reads KESSIQKGNI…SLMSQHWDMV (136 aa).

It belongs to the glycosyltransferase 2 family. GalNAc-T subfamily. Requires Mn(2+) as cofactor. Detected in renal tubules (at protein level). Highly expressed in fetal and adult kidney. Widely expressed at low level. Weakly expressed in whole brain, cerebellum, thymus, lung, mammary gland, liver, stomach, small intestine, colon, pancreas, spleen, bladder, uterus, placenta, testis, ovary, skeletal muscle, leukocyte, B-cell, bone marrow, fetal brain, fetal thymus, fetal lung, fetal liver, fetal small intestine, fetal spleen, fetal skeletal and fetus. Detected in renal tubules (at protein level).

Its subcellular location is the golgi apparatus membrane. The enzyme catalyses L-seryl-[protein] + UDP-N-acetyl-alpha-D-galactosamine = a 3-O-[N-acetyl-alpha-D-galactosaminyl]-L-seryl-[protein] + UDP + H(+). It catalyses the reaction L-threonyl-[protein] + UDP-N-acetyl-alpha-D-galactosamine = a 3-O-[N-acetyl-alpha-D-galactosaminyl]-L-threonyl-[protein] + UDP + H(+). It participates in protein modification; protein glycosylation. In terms of biological role, catalyzes the initial reaction in O-linked oligosaccharide biosynthesis, the transfer of an N-acetyl-D-galactosamine residue to a serine or threonine residue on the protein receptor. Displays activity toward mucin-derived peptide substrates such as Muc2, Muc5AC, Muc7, and Muc13 (-58). May be involved in O-glycosylation in kidney. In Homo sapiens (Human), this protein is Polypeptide N-acetylgalactosaminyltransferase 14 (GALNT14).